We begin with the raw amino-acid sequence, 446 residues long: Phosphoglucosamine mutase (446 aa).

Residue Ser-101 is the Phosphoserine intermediate of the active site. Mg(2+)-binding residues include Ser-101, Asp-240, Asp-242, and Asp-244. Residue Ser-101 is modified to Phosphoserine.

Belongs to the phosphohexose mutase family. Requires Mg(2+) as cofactor. In terms of processing, activated by phosphorylation.

The enzyme catalyses alpha-D-glucosamine 1-phosphate = D-glucosamine 6-phosphate. Functionally, catalyzes the conversion of glucosamine-6-phosphate to glucosamine-1-phosphate. In Coxiella burnetii (strain Dugway 5J108-111), this protein is Phosphoglucosamine mutase.